The sequence spans 170 residues: Large ribosomal subunit protein uL15 (170 aa).

A compositionally biased stretch (basic and acidic residues) spans 1–12 (MKLHDLRPAEGS). Residues 1 to 50 (MKLHDLRPAEGSHRKRKRIGRGHGSGKVKTGGKGMMGQKARSGPGPYRTF) are disordered. The segment covering 13-26 (HRKRKRIGRGHGSG) has biased composition (basic residues).

Belongs to the universal ribosomal protein uL15 family. Part of the 50S ribosomal subunit.

Binds to the 23S rRNA. The sequence is that of Large ribosomal subunit protein uL15 from Chloroflexus aggregans (strain MD-66 / DSM 9485).